A 290-amino-acid polypeptide reads, in one-letter code: 4-diphosphocytidyl-2-C-methyl-D-erythritol kinase (290 aa).

Residue K13 is part of the active site. 96–106 (PMGGGIGGGSS) is a binding site for ATP. The active site involves D138.

Belongs to the GHMP kinase family. IspE subfamily.

It catalyses the reaction 4-CDP-2-C-methyl-D-erythritol + ATP = 4-CDP-2-C-methyl-D-erythritol 2-phosphate + ADP + H(+). It participates in isoprenoid biosynthesis; isopentenyl diphosphate biosynthesis via DXP pathway; isopentenyl diphosphate from 1-deoxy-D-xylulose 5-phosphate: step 3/6. Its function is as follows. Catalyzes the phosphorylation of the position 2 hydroxy group of 4-diphosphocytidyl-2C-methyl-D-erythritol. In Vibrio cholerae serotype O1 (strain ATCC 39541 / Classical Ogawa 395 / O395), this protein is 4-diphosphocytidyl-2-C-methyl-D-erythritol kinase.